We begin with the raw amino-acid sequence, 251 residues long: Sugar fermentation stimulation protein homolog (251 aa).

It belongs to the SfsA family.

The sequence is that of Sugar fermentation stimulation protein homolog from Prochlorococcus marinus (strain MIT 9313).